The sequence spans 616 residues: Spastin (616 aa).

Residues 1-43 (MNSPGGRGKKKGSGGASNPVPPRPPPPCLAPAPPAAGPAPPPE) are disordered. The segment at 1 to 50 (MNSPGGRGKKKGSGGASNPVPPRPPPPCLAPAPPAAGPAPPPESPHKRNL) is required for nuclear localization. The Cytoplasmic segment spans residues 1–56 (MNSPGGRGKKKGSGGASNPVPPRPPPPCLAPAPPAAGPAPPPESPHKRNLYYFSYP). The segment at 1–80 (MNSPGGRGKK…LGLLFVWLCQ (80 aa)) is required for interaction with ATL1. The required for midbody localization stretch occupies residues 1–194 (MNSPGGRGKK…LVMAKDRLQL (194 aa)). The interval 1–300 (MNSPGGRGKK…GTPKTNRTNK (300 aa)) is required for interaction with RTN1. The Nuclear localization signal signature appears at 4–11 (PGGRGKKK). The span at 19–43 (PVPPRPPPPCLAPAPPAAGPAPPPE) shows a compositional bias: pro residues. Residues 50–87 (LYYFSYPLFVGFALLRLVAFHLGLLFVWLCQRFSRALM) form a required for interaction with SSNA1 and microtubules region. The helical intramembrane region spans 57 to 77 (LFVGFALLRLVAFHLGLLFVW). Positions 59–67 (VGFALLRLV) match the Nuclear export signal motif. The Cytoplasmic segment spans residues 78–616 (LCQRFSRALM…WNKDFGDTTV (539 aa)). The sufficient for interaction with CHMP1B stretch occupies residues 112–196 (EAERVRVFHK…MAKDRLQLLE (85 aa)). Positions 114 to 200 (ERVRVFHKQA…RLQLLEKMQP (87 aa)) are required for interaction with microtubules. One can recognise an MIT domain in the interval 120–195 (HKQAFEYISI…VMAKDRLQLL (76 aa)). The segment at 224 to 266 (HLQSESGAVPKRKDPLTHTSNSLPRSKTVMKTGSAGLSGHHRA) is disordered. The segment at 228-616 (ESGAVPKRKD…WNKDFGDTTV (389 aa)) is sufficient for microtubule severing. A compositionally biased stretch (polar residues) spans 240 to 254 (THTSNSLPRSKTVMK). Phosphoserine is present on residues S245 and S268. Residues 270 to 328 (SGLSMVSGVKQGSGPAPTTHKGTPKTNRTNKPSTPTTATRKKKDLKNFRNVDSNLANLI) form a required for interaction with microtubules and microtubule severing region. A disordered region spans residues 278-312 (VKQGSGPAPTTHKGTPKTNRTNKPSTPTTATRKKK). Residues 289–307 (HKGTPKTNRTNKPSTPTTA) show a composition bias toward polar residues. T306 bears the Phosphothreonine mark. A Nuclear localization signal motif is present at residues 309–312 (RKKK). Positions 310 to 312 (KKK) are required for interaction with microtubules. ATP is bound at residue 382–389 (GPPGNGKT). Position 597 is a phosphoserine (S597).

This sequence belongs to the AAA ATPase family. Spastin subfamily. Homohexamer. Mostly monomeric, but assembles into hexameric structure for short periods of time. Oligomerization seems to be a prerequisite for catalytic activity. Binding to ATP in a cleft between two adjacent subunits stabilizes the homohexameric form. Binds to microtubules at least in part via the alpha-tubulin and beta-tubulin tails. The hexamer adopts a ring conformation through which microtubules pass prior to being severed. Does not interact strongly with tubulin heterodimers. Interacts (via MIT domain) with CHMP1B; the interaction is direct. Interacts with SSNA1. Interacts with ATL1. Interacts with RTN1. Interacts with ZFYVE27. Isoform 1 but not isoform 3 interacts with RTN2. Interacts with REEP1. Interacts (via MIT domain) with IST1. Expressed in brain, heart, kidney, liver, lung, pancreas, placenta and skeletal muscle. The short isoforms may predominate in brain and spinal cord.

Its subcellular location is the membrane. The protein localises to the endoplasmic reticulum. It localises to the midbody. It is found in the cytoplasm. The protein resides in the cytoskeleton. Its subcellular location is the microtubule organizing center. The protein localises to the centrosome. It localises to the perinuclear region. It is found in the nucleus. The protein resides in the spindle. Its subcellular location is the cell projection. The protein localises to the axon. It localises to the endoplasmic reticulum membrane. It is found in the nucleus membrane. The protein resides in the lipid droplet. Its subcellular location is the endosome. It carries out the reaction n ATP + n H2O + a microtubule = n ADP + n phosphate + (n+1) alpha/beta tubulin heterodimers.. With respect to regulation, allosteric enzyme with a cooperative mechanism; at least two neighbor subunits influence each other strongly in spastin hexamers. Microtubule binding promotes cooperative interactions among spastin subunits. ATP-bound enzyme interacts strongly and cooperatively with microtubules; this interaction stimulates ATP hydrolysis. In terms of biological role, ATP-dependent microtubule severing protein that specifically recognizes and cuts microtubules that are polyglutamylated. Preferentially recognizes and acts on microtubules decorated with short polyglutamate tails: severing activity increases as the number of glutamates per tubulin rises from one to eight, but decreases beyond this glutamylation threshold. Severing activity is not dependent on tubulin acetylation or detyrosination. Microtubule severing promotes reorganization of cellular microtubule arrays and the release of microtubules from the centrosome following nucleation. It is critical for the biogenesis and maintenance of complex microtubule arrays in axons, spindles and cilia. SPAST is involved in abscission step of cytokinesis and nuclear envelope reassembly during anaphase in cooperation with the ESCRT-III complex. Recruited at the midbody, probably by IST1, and participates in membrane fission during abscission together with the ESCRT-III complex. Recruited to the nuclear membrane by IST1 and mediates microtubule severing, promoting nuclear envelope sealing and mitotic spindle disassembly during late anaphase. Required for membrane traffic from the endoplasmic reticulum (ER) to the Golgi and endosome recycling. Recruited by IST1 to endosomes and regulates early endosomal tubulation and recycling by mediating microtubule severing. Probably plays a role in axon growth and the formation of axonal branches. Involved in lipid metabolism by regulating the size and distribution of lipid droplets. This is Spastin from Homo sapiens (Human).